The following is a 495-amino-acid chain: Lysine--tRNA ligase (495 aa).

Mg(2+) is bound by residues glutamate 406 and glutamate 413.

This sequence belongs to the class-II aminoacyl-tRNA synthetase family. In terms of assembly, homodimer. Requires Mg(2+) as cofactor.

The protein localises to the cytoplasm. It catalyses the reaction tRNA(Lys) + L-lysine + ATP = L-lysyl-tRNA(Lys) + AMP + diphosphate. The sequence is that of Lysine--tRNA ligase from Leptospira borgpetersenii serovar Hardjo-bovis (strain JB197).